Consider the following 221-residue polypeptide: Deoxyribose-phosphate aldolase (221 aa).

Asp-89 (proton donor/acceptor) is an active-site residue. Lys-151 serves as the catalytic Schiff-base intermediate with acetaldehyde. The active-site Proton donor/acceptor is Lys-180.

It belongs to the DeoC/FbaB aldolase family. DeoC type 1 subfamily.

The protein localises to the cytoplasm. The enzyme catalyses 2-deoxy-D-ribose 5-phosphate = D-glyceraldehyde 3-phosphate + acetaldehyde. Its pathway is carbohydrate degradation; 2-deoxy-D-ribose 1-phosphate degradation; D-glyceraldehyde 3-phosphate and acetaldehyde from 2-deoxy-alpha-D-ribose 1-phosphate: step 2/2. Functionally, catalyzes a reversible aldol reaction between acetaldehyde and D-glyceraldehyde 3-phosphate to generate 2-deoxy-D-ribose 5-phosphate. This Brevibacillus brevis (strain 47 / JCM 6285 / NBRC 100599) protein is Deoxyribose-phosphate aldolase.